A 295-amino-acid chain; its full sequence is Ribosomal RNA small subunit methyltransferase A (295 aa).

Asparagine 29, leucine 31, glycine 56, glutamate 77, aspartate 102, and asparagine 128 together coordinate S-adenosyl-L-methionine.

It belongs to the class I-like SAM-binding methyltransferase superfamily. rRNA adenine N(6)-methyltransferase family. RsmA subfamily.

The protein localises to the cytoplasm. It catalyses the reaction adenosine(1518)/adenosine(1519) in 16S rRNA + 4 S-adenosyl-L-methionine = N(6)-dimethyladenosine(1518)/N(6)-dimethyladenosine(1519) in 16S rRNA + 4 S-adenosyl-L-homocysteine + 4 H(+). Specifically dimethylates two adjacent adenosines (A1518 and A1519) in the loop of a conserved hairpin near the 3'-end of 16S rRNA in the 30S particle. May play a critical role in biogenesis of 30S subunits. The protein is Ribosomal RNA small subunit methyltransferase A of Listeria monocytogenes serotype 4b (strain CLIP80459).